Here is a 248-residue protein sequence, read N- to C-terminus: MSFVVIIPARFASTRLPGKPLQDINGKPMIVHVLERARESGADRIIVATDHEDVARAVEAAGGEVCMTRADHQSGTERLAEVVEKCAFSDDTIIVNIQGDEPMIPPAIVRQVAENLAASSSGMATLAVPIHDAEEAFNPNAVKVVMDAKGYALYFSRATIPWDRDRFAQSRETIGDSLLRHIGIYGYRAGFIRRYVSWAPSPLEQIEMLEQLRVLWYGEKIHVAVAAEVPGTGVDTPEDLERVRAELR.

The protein belongs to the KdsB family.

It is found in the cytoplasm. It catalyses the reaction 3-deoxy-alpha-D-manno-oct-2-ulosonate + CTP = CMP-3-deoxy-beta-D-manno-octulosonate + diphosphate. It functions in the pathway nucleotide-sugar biosynthesis; CMP-3-deoxy-D-manno-octulosonate biosynthesis; CMP-3-deoxy-D-manno-octulosonate from 3-deoxy-D-manno-octulosonate and CTP: step 1/1. Its pathway is bacterial outer membrane biogenesis; lipopolysaccharide biosynthesis. Activates KDO (a required 8-carbon sugar) for incorporation into bacterial lipopolysaccharide in Gram-negative bacteria. The sequence is that of 3-deoxy-manno-octulosonate cytidylyltransferase from Klebsiella pneumoniae subsp. pneumoniae (strain ATCC 700721 / MGH 78578).